Here is a 516-residue protein sequence, read N- to C-terminus: Histidine ammonia-lyase (516 aa).

The segment at residues 143-145 is a cross-link (5-imidazolinone (Ala-Gly)); that stretch reads ASG. A 2,3-didehydroalanine (Ser) modification is found at Ser-144.

This sequence belongs to the PAL/histidase family. In terms of processing, contains an active site 4-methylidene-imidazol-5-one (MIO), which is formed autocatalytically by cyclization and dehydration of residues Ala-Ser-Gly.

It localises to the cytoplasm. It carries out the reaction L-histidine = trans-urocanate + NH4(+). It functions in the pathway amino-acid degradation; L-histidine degradation into L-glutamate; N-formimidoyl-L-glutamate from L-histidine: step 1/3. This chain is Histidine ammonia-lyase, found in Koribacter versatilis (strain Ellin345).